We begin with the raw amino-acid sequence, 295 residues long: Probable CBASS effector molecule IK1_05631 (295 aa).

4 helical membrane passes run 26-46 (IFYAVRISISILIPILSISIY), 56-76 (SNTGVWFSVIGSIWLLIAYQI), 167-187 (ILLFTVSVLYLFLTIAFGFFV), and 190-210 (SMQEYIIKILLPSMSILIYGF).

It localises to the cell membrane. Functionally, effector protein of a CBASS antiviral system. CBASS (cyclic oligonucleotide-based antiphage signaling system) provides immunity against bacteriophage. The CD-NTase protein synthesizes cyclic nucleotides in response to infection; these serve as specific second messenger signals. The signals activate a diverse range of effectors, leading to bacterial cell death and thus abortive phage infection. A type I-B CBASS system. Protects B.subtilis against phage infection. When IK1_05630 and IK1_05631 are introduced in B.subtilis BEST7003 there is 1000-fold protection against phage SBSphiC. Both genes are required for protection. Activation leads to bacterial cell lysis and death, which occurs before the phage has finished its replication cycle, thus protecting non-infected bacteria by aborting the phage infection and preventing its propagation. This Bacillus cereus (strain VD146) protein is Probable CBASS effector molecule IK1_05631.